Consider the following 445-residue polypeptide: Phosphoglucosamine mutase (445 aa).

The active-site Phosphoserine intermediate is the S102. Residues S102, D240, D242, and D244 each coordinate Mg(2+). Phosphoserine is present on S102.

The protein belongs to the phosphohexose mutase family. The cofactor is Mg(2+). Post-translationally, activated by phosphorylation.

It catalyses the reaction alpha-D-glucosamine 1-phosphate = D-glucosamine 6-phosphate. Catalyzes the conversion of glucosamine-6-phosphate to glucosamine-1-phosphate. This chain is Phosphoglucosamine mutase, found in Mycobacterium sp. (strain JLS).